We begin with the raw amino-acid sequence, 126 residues long: UPF0538 protein C2orf76 homolog (126 aa).

This sequence belongs to the UPF0538 family.

This chain is UPF0538 protein C2orf76 homolog, found in Xenopus tropicalis (Western clawed frog).